Consider the following 267-residue polypeptide: Undecaprenyl-diphosphatase (267 aa).

The next 8 helical transmembrane spans lie at M1–I21, Q39–F59, A83–M103, L111–V131, A144–T164, F189–T209, T218–L238, and M246–M266.

The protein belongs to the UppP family.

Its subcellular location is the cell inner membrane. It carries out the reaction di-trans,octa-cis-undecaprenyl diphosphate + H2O = di-trans,octa-cis-undecaprenyl phosphate + phosphate + H(+). Functionally, catalyzes the dephosphorylation of undecaprenyl diphosphate (UPP). Confers resistance to bacitracin. This Vibrio atlanticus (strain LGP32) (Vibrio splendidus (strain Mel32)) protein is Undecaprenyl-diphosphatase.